A 390-amino-acid chain; its full sequence is Protein PIN-LIKES 3 (390 aa).

Topologically, residues 1–14 (MVKLLELFITSSKP) are lumenal. A helical transmembrane segment spans residues 15–35 (VVEILLITSVGFYMALDGVNL). The Cytoplasmic portion of the chain corresponds to 36 to 43 (LGHDARKY). A helical transmembrane segment spans residues 44–61 (LNNIVFYVFSPSLIGSRL). At 62–76 (ADSVTYESLVKMWFM) the chain is on the lumenal side. Residues 77 to 97 (PVNVLLTFIIGSLLGWIVIVI) form a helical membrane-spanning segment. Over 98–107 (TKPPSHLRGL) the chain is Cytoplasmic. Residues 108 to 128 (ILGCCAAGNLGNMPLIIIPAV) traverse the membrane as a helical segment. Residues 129-144 (CKEKGGPFGDPESCQK) are Lumenal-facing. Residues 145-165 (YGMGYVALSMAMGSIYIWTYV) form a helical membrane-spanning segment. Residues 166 to 227 (YNLMRVLSNS…SLSQKVNLKT (62 aa)) are Cytoplasmic-facing. Residues 228-248 (IFAPSTIAAMIALVIGLITPL) form a helical membrane-spanning segment. Residues 249–265 (RKLIIGTEAPLRVLQDS) lie on the Lumenal side of the membrane. The chain crosses the membrane as a helical span at residues 266-286 (VTLVGDGAVPAMTMIIGGNLL). Over 287–297 (KGLRSSGMKMS) the chain is Cytoplasmic. A helical membrane pass occupies residues 298-318 (SIIGVLVARYVLLPMSGVLIV). At 319–331 (RGAYKLDLVTSEP) the chain is on the lumenal side. Residues 332-352 (LYQFVLLLQYAVPPAMNLGTI) form a helical membrane-spanning segment. The Cytoplasmic segment spans residues 353–364 (TQLFGTGESECS). The chain crosses the membrane as a helical span at residues 365-385 (VIMLWTYSLASIALTVWPTFF). Over 386 to 390 (MWLVA) the chain is Lumenal.

This sequence belongs to the auxin efflux carrier (TC 2.A.69.2) family. As to expression, expressed in seedlings, rosette and cauline leaves, flowers and siliques.

It is found in the endoplasmic reticulum membrane. Involved in cellular auxin homeostasis by regulating auxin metabolism. Regulates intracellular auxin accumulation at the endoplasmic reticulum and thus auxin availability for nuclear auxin signaling. The sequence is that of Protein PIN-LIKES 3 (PILS3) from Arabidopsis thaliana (Mouse-ear cress).